The primary structure comprises 880 residues: MKNLYFRVITIVIGLYFTGIMTNASRKSNILFNSECQWNEYILTNCSFTGKCDIPVDISQTAATVDVSFNFFRVLLQSHTKKEEWKIKHLDLSNNLISKITLSPFAYLHALEVLNLSNNAIHSLSLDLLSPKSSWVKRHRSSFRNRFPLLKVLILQRNKLSDTPKGLWKLKSLQSLDLSFNGILQIGWSDFHNCLQLENLCLKSNKIFKIPPQAFKDLKKLQVIDLSNNALITILPMMIIALEFPHLVVDLADNNWQCDDSVAVFQNFISESWRKKWNVICNRSIGSEEANGGTPQSRISRETRLPPIHLHRMKSLIRSKAERPQGGRHTGISTLGKKAKAGSGLRKKQRRLPRSVRSTRDVQAAGKKEDAPQDLALAVCLSVFITFLVAFSLGAFTRPYVDRLWQKKCQSKSPGLDNAYSNEGFYDDMEAAGHTPHPETHLRQVFPHLSLYENQTPFWVTQPHPHATVIPDRTLGRSRKDPGSSQSPGQCGDNTGAGSGNDGAVYSILQRHPHAGNRELMSAAQDHIHRNDILGEWTYETVAQEEPLSAHSVGVSSVAGTSHAVSGSSRYDSNELDPSLSGEITASLCKMLTHAEAQRTGDSKERGGTEQSLWDSQMEFSKERQVSSSIDLLSIQQPRLSGARAEEALSAHYSEVPYGDPRDTGPSVFPPRWDSGLDVTPANKEPVQKSTPSDTCCELESDCDSDEGSLFTLSSISSESARSKTEEAVPDEESLQDESSGASKDNVTAVDSLEENVTFQTIPGKCKNQEDPFEKPLISAPDSGMYKTHLENASDTDRSEGLSPWPRSPGNSPLGDEFPGMFTYDYDTALQSKAAEWHCSLRDLEFSNVDVLQQTPPCSAEVPSDPDKAAFHERDSDILK.

A helical transmembrane segment spans residues 4-24; it reads LYFRVITIVIGLYFTGIMTNA. An N-linked (GlcNAc...) asparagine glycan is attached at N45. 6 LRR repeats span residues 86 to 107, 110 to 130, 149 to 171, 172 to 193, 196 to 217, and 220 to 241; these read KIKH…PFAY, ALEV…DLLS, LLKV…WKLK, SLQS…DFHN, QLEN…AFKD, and KLQV…MIIA. N-linked (GlcNAc...) asparagine glycosylation occurs at N115. Positions 319–368 are disordered; sequence SKAERPQGGRHTGISTLGKKAKAGSGLRKKQRRLPRSVRSTRDVQAAGKK. Over residues 337 to 354 the composition is skewed to basic residues; sequence KKAKAGSGLRKKQRRLPR. A helical transmembrane segment spans residues 376 to 396; sequence ALAVCLSVFITFLVAFSLGAF. Disordered stretches follow at residues 463–504 and 679–746; these read PHPH…NDGA and VTPA…SKDN. The segment covering 483–493 has biased composition (polar residues); it reads GSSQSPGQCGD. Over residues 697–707 the composition is skewed to acidic residues; it reads CELESDCDSDE. Residues 709-720 are compositionally biased toward low complexity; it reads SLFTLSSISSES. The residue at position 723 (S723) is a Phosphoserine. Residues 737–746 are compositionally biased toward polar residues; sequence DESSGASKDN. N746 is a glycosylation site (N-linked (GlcNAc...) asparagine). Position 752 is a phosphoserine (S752). A glycan (N-linked (GlcNAc...) asparagine) is linked at N756. Disordered regions lie at residues 764–816 and 855–880; these read GKCK…PLGD and TPPC…DILK. Composition is skewed to basic and acidic residues over residues 788 to 800 and 865 to 880; these read THLE…DRSE and DPDK…DILK.

It localises to the membrane. This is Leucine-rich repeat-containing protein 66 (LRRC66) from Homo sapiens (Human).